We begin with the raw amino-acid sequence, 271 residues long: HTH-type transcriptional repressor AllR (271 aa).

In terms of domain architecture, HTH iclR-type spans 21-83 (AQALERGIAI…SQLGWWHIGL (63 aa)). A DNA-binding region (H-T-H motif) is located at residues 43 to 62 (VSDISLNLDLPLSTTFRLLK). One can recognise an IclR-ED domain in the interval 98–267 (VLSVAGPFMR…ARDISTALGL (170 aa)). Glyoxylate-binding positions include 154-156 (SGA), Asp-207, Cys-217, and 234-236 (SIS).

In terms of biological role, negative regulator of allantoin and glyoxylate utilization operons. Binds to the gcl promoter and to the allS-allA intergenic region. The chain is HTH-type transcriptional repressor AllR (allR) from Escherichia coli O6:H1 (strain CFT073 / ATCC 700928 / UPEC).